The sequence spans 156 residues: Small ribosomal subunit protein uS7 (156 aa).

This sequence belongs to the universal ribosomal protein uS7 family. In terms of assembly, part of the 30S ribosomal subunit. Contacts proteins S9 and S11.

In terms of biological role, one of the primary rRNA binding proteins, it binds directly to 16S rRNA where it nucleates assembly of the head domain of the 30S subunit. Is located at the subunit interface close to the decoding center, probably blocks exit of the E-site tRNA. This chain is Small ribosomal subunit protein uS7, found in Nitratidesulfovibrio vulgaris (strain DSM 19637 / Miyazaki F) (Desulfovibrio vulgaris).